A 1406-amino-acid polypeptide reads, in one-letter code: Protein crumbs homolog 1 (1406 aa).

Positions 1–25 (MALKNINYLLIFYLSFSLLIYIKNS) are cleaved as a signal peptide. At 26-1347 (FCNKNNTRCL…DDLISDIFTT (1322 aa)) the chain is on the extracellular side. 3 N-linked (GlcNAc...) asparagine glycosylation sites follow: Asn30, Asn41, and Asn42. EGF-like domains lie at 30–68 (NNTR…KDCD), 70–108 (MKDP…TICE), and 110–146 (TIGS…RFCE). 20 disulfide bridges follow: Cys34–Cys45, Cys39–Cys54, Cys56–Cys67, Cys74–Cys85, Cys79–Cys96, Cys98–Cys107, Cys114–Cys125, Cys119–Cys134, Cys136–Cys145, Cys152–Cys163, Cys157–Cys172, Cys174–Cys183, Cys190–Cys201, Cys195–Cys210, Cys212–Cys221, Cys228–Cys239, Cys233–Cys248, Cys250–Cys259, Cys266–Cys277, and Cys271–Cys286. Residues 148-184 (DHDECASSPCQNGAVCQDGIDGYSCFCVPGYQGRHCD) form the EGF-like 4; calcium-binding domain. Residues 186 to 222 (EVDECASDPCKNEATCLNEIGRYTCICPHNYSGVNCE) enclose the EGF-like 5; calcium-binding domain. Asn215 carries N-linked (GlcNAc...) asparagine glycosylation. The 37-residue stretch at 224–260 (EIDECWSQPCLNGATCQDALGAYFCDCAPGFLGDHCE) folds into the EGF-like 6; calcium-binding domain. The EGF-like 7; calcium-binding domain maps to 262–299 (NTDECASQPCLHGGLCVDGENRYSCNCTGSGFTGTHCE). N-linked (GlcNAc...) asparagine glycosylation occurs at Asn287. 13 cysteine pairs are disulfide-bonded: Cys288–Cys298, Cys305–Cys316, Cys310–Cys325, Cys327–Cys336, Cys343–Cys354, Cys348–Cys383, Cys385–Cys394, Cys401–Cys412, Cys406–Cys421, Cys423–Cys438, Cys445–Cys456, Cys450–Cys469, and Cys471–Cys480. EGF-like domains are found at residues 301-337 (LMPL…AQCE) and 339-395 (DLNE…IHCE). N-linked (GlcNAc...) asparagine glycosylation is found at Asn313 and Asn322. Positions 397 to 439 (DVNECSSNPCQNGGTCENLPGNYTCHCPFDNLSRTFYGGRDCS) constitute an EGF-like 10; calcium-binding domain. Asn418, Asn427, and Asn453 each carry an N-linked (GlcNAc...) asparagine glycan. In terms of domain architecture, EGF-like 11 spans 441-481 (ILLGCTHQQCLNNGTCIPHFQDGQHGFSCLCPSGYTGSLCE). The Laminin G-like 1 domain maps to 485 to 670 (TLSFEGDGFL…GSSLNVKAGC (186 aa)). 3 N-linked (GlcNAc...) asparagine glycosylation sites follow: Asn550, Asn561, and Asn657. Intrachain disulfides connect Cys642–Cys670, Cys676–Cys687, Cys681–Cys696, and Cys698–Cys707. One can recognise an EGF-like 12 domain in the interval 672–708 (RKDWCESQPCQSRGRCINLWLSYQCDCHRPYEGPNCL). In terms of domain architecture, Laminin G-like 2 spans 714 to 885 (GRFGQDDSTG…PVLVNVTQGC (172 aa)). N-linked (GlcNAc...) asparagine glycans are attached at residues Asn757, Asn871, and Asn880. Cystine bridges form between Cys851–Cys885, Cys891–Cys902, Cys896–Cys911, Cys913–Cys922, Cys928–Cys939, and Cys933–Cys948. 2 consecutive EGF-like domains span residues 887 to 923 (GDNS…KACE) and 924 to 960 (EVQW…QSGQ). Residues 950-1137 (ANAVFNGQSG…ISTNSVVTGC (188 aa)) enclose the Laminin G-like 3 domain. N-linked (GlcNAc...) asparagine glycosylation is found at Asn968, Asn975, and Asn1000. Cystine bridges form between Cys1096-Cys1137, Cys1143-Cys1154, Cys1148-Cys1163, Cys1165-Cys1174, Cys1181-Cys1191, Cys1186-Cys1200, Cys1202-Cys1211, Cys1218-Cys1229, Cys1223-Cys1238, Cys1240-Cys1249, Cys1259-Cys1274, Cys1268-Cys1283, Cys1285-Cys1294, Cys1301-Cys1312, Cys1306-Cys1321, and Cys1323-Cys1332. Residues 1139–1175 (QLNVCNSNPCLHGGNCEDIYSSYHCSCPLGWSGKHCE) enclose the EGF-like 15 domain. In terms of domain architecture, EGF-like 16; calcium-binding spans 1177 to 1212 (NIDECFSNPCIHGNCSDRVAAYHCTCEPGYTGVNCE). An N-linked (GlcNAc...) asparagine glycan is attached at Asn1190. EGF-like domains are found at residues 1214–1250 (DIDN…KFCR) and 1255–1295 (PSTV…EWCE). 3 N-linked (GlcNAc...) asparagine glycosylation sites follow: Asn1243, Asn1265, and Asn1273. Positions 1297–1333 (DIDECASDPCVNGGLCQDLLNKFQCLCDVAFAGERCE) constitute an EGF-like 19; calcium-binding domain. A helical membrane pass occupies residues 1348–1368 (IGSVTVALLLILLLAIVASVV). At 1369–1406 (TSNKRATQGTYSPSRQEKEGSRVEMWNLMPPPAMERLI) the chain is on the cytoplasmic side. Residues 1370–1406 (SNKRATQGTYSPSRQEKEGSRVEMWNLMPPPAMERLI) are interaction with EPB41L5.

It belongs to the Crumbs protein family. Component of a complex composed of PALS1, CRB1 and EPB41L5. Within the complex, interacts (via intracellular domain) with PALS1 and EPB41L5 (via FERM domain). Forms a complex with MPP4 and PALS1. Interacts with MPDZ/MUPP1 and MPP4. Post-translationally, extensively glycosylated. In terms of tissue distribution, preferential expression in retina, also expressed in brain, testis, fetal brain and fetal eye. Expressed at the outer limiting membrane and apical to adherens junctions in the retina.

The protein resides in the apical cell membrane. It is found in the secreted. The protein localises to the cell projection. Its subcellular location is the cilium. It localises to the photoreceptor outer segment. The protein resides in the photoreceptor inner segment. Plays a role in photoreceptor morphogenesis in the retina. May maintain cell polarization and adhesion. This Homo sapiens (Human) protein is Protein crumbs homolog 1.